The sequence spans 163 residues: Large ribosomal subunit protein uL11 (163 aa).

The interval 1–26 (MAETIEVLVAGGQADPGPPLGPELGP) is disordered.

The protein belongs to the universal ribosomal protein uL11 family. As to quaternary structure, part of the ribosomal stalk of the 50S ribosomal subunit. Interacts with L10 and the large rRNA to form the base of the stalk. L10 forms an elongated spine to which L12 dimers bind in a sequential fashion forming a multimeric L10(L12)X complex.

Forms part of the ribosomal stalk which helps the ribosome interact with GTP-bound translation factors. The sequence is that of Large ribosomal subunit protein uL11 from Halobacterium salinarum (strain ATCC 29341 / DSM 671 / R1).